The primary structure comprises 162 residues: NADH-quinone oxidoreductase subunit I (162 aa).

4Fe-4S ferredoxin-type domains lie at 54–83 (RRYENGEERCIACKLCEAVCPALAITIESE) and 93–122 (TRYDIDLTKCIFCGFCEESCPVDSIVETQI). Residues Cys-63, Cys-66, Cys-69, Cys-73, Cys-102, Cys-105, Cys-108, and Cys-112 each contribute to the [4Fe-4S] cluster site.

Belongs to the complex I 23 kDa subunit family. As to quaternary structure, NDH-1 is composed of 14 different subunits. Subunits NuoA, H, J, K, L, M, N constitute the membrane sector of the complex. The cofactor is [4Fe-4S] cluster.

The protein localises to the cell inner membrane. The catalysed reaction is a quinone + NADH + 5 H(+)(in) = a quinol + NAD(+) + 4 H(+)(out). In terms of biological role, NDH-1 shuttles electrons from NADH, via FMN and iron-sulfur (Fe-S) centers, to quinones in the respiratory chain. The immediate electron acceptor for the enzyme in this species is believed to be ubiquinone. Couples the redox reaction to proton translocation (for every two electrons transferred, four hydrogen ions are translocated across the cytoplasmic membrane), and thus conserves the redox energy in a proton gradient. The sequence is that of NADH-quinone oxidoreductase subunit I from Burkholderia mallei (strain NCTC 10247).